Reading from the N-terminus, the 581-residue chain is Transcription factor GTE2 (581 aa).

The segment at 130–153 is disordered; sequence VKKTKTKKKKIGHGQKRSNPFATD. A compositionally biased stretch (basic residues) spans 131–145; sequence KKTKTKKKKIGHGQK. The Bromo domain occupies 169-275; sequence KVLKSMMTTC…SQFDVWFNPT (107 aa). Disordered regions lie at residues 329-399 and 470-581; these read PLLP…KREM and KRQG…KEAP. Over residues 346–365 the composition is skewed to pro residues; sequence PSPPPSPVQPPPPPSPPPQP. Residues 389–470 form the NET domain; it reads PKAKDPNKRE…NYRKMASKIK (82 aa). 2 stretches are compositionally biased toward basic and acidic residues: residues 390–399 and 493–503; these read KAKDPNKREM and SAEKRGRKGGE. Residues 504 to 517 are compositionally biased toward acidic residues; it reads AGEEDVDIGEDIPV. The span at 530 to 564 shows a compositional bias: low complexity; that stretch reads TAAAASGGSSSSGSFSSSGSSSSSDSESGSSSGSD.

The protein resides in the nucleus. The sequence is that of Transcription factor GTE2 (GTE2) from Arabidopsis thaliana (Mouse-ear cress).